A 192-amino-acid chain; its full sequence is Cell division protein SepF (192 aa).

The disordered stretch occupies residues 154–192; it reads QEEPAPSNVTTTTQQSEETISESVTAPEPAWGTPVASAI. The segment covering 162–178 has biased composition (low complexity); that stretch reads VTTTTQQSEETISESVT.

It belongs to the SepF family. Homodimer. Interacts with FtsZ.

It localises to the cytoplasm. Cell division protein that is part of the divisome complex and is recruited early to the Z-ring. Probably stimulates Z-ring formation, perhaps through the cross-linking of FtsZ protofilaments. Its function overlaps with FtsA. The sequence is that of Cell division protein SepF from Prochlorococcus marinus (strain MIT 9211).